Here is a 217-residue protein sequence, read N- to C-terminus: Meiotic expression up-regulated protein 29 (217 aa).

Residues 1–21 form the signal peptide; sequence MFVVKTAVLLFFALFIGNTYA. The Extracellular segment spans residues 22–133; that stretch reads YTYSLDRIQA…SGVLLHRPWK (112 aa). Residue asparagine 84 is glycosylated (N-linked (GlcNAc...) asparagine). A helical membrane pass occupies residues 134–154; sequence LFSLKPFTAAFVLLLAASYLA. Over 155–217 the chain is Cytoplasmic; the sequence is TACFRMLGYL…VPVPVLDESV (63 aa).

Its subcellular location is the membrane. The chain is Meiotic expression up-regulated protein 29 (meu29) from Schizosaccharomyces pombe (strain 972 / ATCC 24843) (Fission yeast).